Here is a 490-residue protein sequence, read N- to C-terminus: Betaine aldehyde dehydrogenase (490 aa).

Residues threonine 26, isoleucine 27, and aspartate 93 each contribute to the K(+) site. NAD(+) is bound at residue 150–152 (GAW). Catalysis depends on lysine 162, which acts as the Charge relay system. NAD(+) is bound at residue 176–179 (KPSE). Valine 180 contacts K(+). Residue 230-233 (GVAS) coordinates NAD(+). Position 246 (leucine 246) interacts with K(+). The active-site Proton acceptor is glutamate 252. NAD(+) is bound by residues glycine 254, cysteine 286, and glutamate 387. The Nucleophile role is filled by cysteine 286. Cysteine 286 bears the Cysteine sulfenic acid (-SOH) mark. K(+) contacts are provided by lysine 457 and glycine 460. Residue glutamate 464 is the Charge relay system of the active site.

It belongs to the aldehyde dehydrogenase family. As to quaternary structure, dimer of dimers. The cofactor is K(+).

The catalysed reaction is betaine aldehyde + NAD(+) + H2O = glycine betaine + NADH + 2 H(+). It functions in the pathway amine and polyamine biosynthesis; betaine biosynthesis via choline pathway; betaine from betaine aldehyde: step 1/1. In terms of biological role, involved in the biosynthesis of the osmoprotectant glycine betaine. Catalyzes the irreversible oxidation of betaine aldehyde to the corresponding acid. The sequence is that of Betaine aldehyde dehydrogenase from Escherichia coli O7:K1 (strain IAI39 / ExPEC).